A 120-amino-acid polypeptide reads, in one-letter code: Immunoglobulin kappa variable 2-29 (120 aa).

The N-terminal stretch at 1 to 20 is a signal peptide; the sequence is MRLPAQLLGLLMLWIPGSSA. The segment at 21 to 43 is framework-1; that stretch reads DIVMTQTPLSLSVTPGQPASISC. Residues 21 to 120 form the Ig-like domain; it reads DIVMTQTPLS…YYCMQGIHLP (100 aa). Residues Cys-43 and Cys-113 are joined by a disulfide bond. The interval 44 to 59 is complementarity-determining-1; it reads KSSQSLLHSDGKTYLY. A framework-2 region spans residues 60-74; the sequence is WYLQKPGQSPQLLIY. Residues 75–81 form a complementarity-determining-2 region; sequence EVSSRFS. The framework-3 stretch occupies residues 82–113; that stretch reads GVPDRFSGSGSGTDFTLKISRVEAEDVGVYYC. Residues 114–120 form a complementarity-determining-3 region; the sequence is MQGIHLP.

As to quaternary structure, immunoglobulins are composed of two identical heavy chains and two identical light chains; disulfide-linked.

Its subcellular location is the secreted. It is found in the cell membrane. Its function is as follows. V region of the variable domain of immunoglobulin light chains that participates in the antigen recognition. Immunoglobulins, also known as antibodies, are membrane-bound or secreted glycoproteins produced by B lymphocytes. In the recognition phase of humoral immunity, the membrane-bound immunoglobulins serve as receptors which, upon binding of a specific antigen, trigger the clonal expansion and differentiation of B lymphocytes into immunoglobulins-secreting plasma cells. Secreted immunoglobulins mediate the effector phase of humoral immunity, which results in the elimination of bound antigens. The antigen binding site is formed by the variable domain of one heavy chain, together with that of its associated light chain. Thus, each immunoglobulin has two antigen binding sites with remarkable affinity for a particular antigen. The variable domains are assembled by a process called V-(D)-J rearrangement and can then be subjected to somatic hypermutations which, after exposure to antigen and selection, allow affinity maturation for a particular antigen. In Homo sapiens (Human), this protein is Immunoglobulin kappa variable 2-29.